The primary structure comprises 556 residues: Tripartite motif-containing protein 16 (556 aa).

The interval 1–60 (MAELDLIAPGPLTGVTAHPLAPLGPDPVSAIPVEKEDADPLSKSGEETQEQGHDPAELGA) is disordered. Residues 33–56 (VEKEDADPLSKSGEETQEQGHDPA) show a composition bias toward basic and acidic residues. 2 B box-type zinc fingers span residues 64-113 (EDQI…LTEP) and 117-156 (QDLR…STVS). A Phosphoserine modification is found at Ser-107. Coiled-coil stretches lie at residues 163–266 (NKEV…RLAA) and 312–332 (NLIQ…REEE). Phosphoserine is present on Ser-195. The B30.2/SPRY domain occupies 347-545 (YRTSKPEPRT…RIVDLGEEPE (199 aa)).

This sequence belongs to the TRIM/RBCC family. In terms of assembly, homodimerizes via its coiled-coil domain. Heterodimerizes with MID1, TRIM24 and PML. Interacts with Galectin-3/LGALS3 in a ULK1-dependent manner; this interaction mediates autophagy of damage endomembranes. Interacts with BECN1. Interacts with ATG16L1. Interacts with p62/SQSTM and LC3B/MAP1LC3B. Phosphorylated by ULK1. Post-translationally, auto-ubiquitinates via its B-Boxes. In terms of tissue distribution, widely expressed. Expressed in basal keratinocytes.

The protein localises to the cytoplasm. The catalysed reaction is S-ubiquitinyl-[E2 ubiquitin-conjugating enzyme]-L-cysteine + [acceptor protein]-L-lysine = [E2 ubiquitin-conjugating enzyme]-L-cysteine + N(6)-ubiquitinyl-[acceptor protein]-L-lysine.. E3 ubiquitin ligase that plays an essential role in the organization of autophagic response and ubiquitination upon lysosomal and phagosomal damages. Plays a role in the stress-induced biogenesis and degradation of protein aggresomes by regulating the p62-KEAP1-NRF2 signaling and particularly by modulating the ubiquitination levels and thus stability of NRF2. Acts as a scaffold protein and facilitates autophagic degradation of protein aggregates by interacting with p62/SQSTM, ATG16L1 and LC3B/MAP1LC3B. In turn, protects the cell against oxidative stress-induced cell death as a consequence of endomembrane damage. The sequence is that of Tripartite motif-containing protein 16 (Trim16) from Mus musculus (Mouse).